The chain runs to 40 residues: Photosystem II reaction center protein Psb30 (40 aa).

A helical membrane pass occupies residues 12-32; the sequence is VIFQLTSVALIIIAGPAVIFV.

It belongs to the Psb30/Ycf12 family. As to quaternary structure, PSII is composed of 1 copy each of membrane proteins PsbA, PsbB, PsbC, PsbD, PsbE, PsbF, PsbH, PsbI, PsbJ, PsbK, PsbL, PsbM, PsbT, PsbX, PsbY, PsbZ, Psb30/Ycf12, peripheral proteins PsbO, CyanoQ (PsbQ), PsbU, PsbV and a large number of cofactors. It forms dimeric complexes.

It localises to the cellular thylakoid membrane. A core subunit of photosystem II (PSII), probably helps stabilize the reaction center. The sequence is that of Photosystem II reaction center protein Psb30 from Nostoc sp. (strain PCC 7120 / SAG 25.82 / UTEX 2576).